The primary structure comprises 225 residues: Uracil-DNA glycosylase (225 aa).

Catalysis depends on Asp-61, which acts as the Proton acceptor.

The protein belongs to the uracil-DNA glycosylase (UDG) superfamily. UNG family.

The protein localises to the cytoplasm. It carries out the reaction Hydrolyzes single-stranded DNA or mismatched double-stranded DNA and polynucleotides, releasing free uracil.. Its function is as follows. Excises uracil residues from the DNA which can arise as a result of misincorporation of dUMP residues by DNA polymerase or due to deamination of cytosine. The polypeptide is Uracil-DNA glycosylase (Actinobacillus pleuropneumoniae serotype 5b (strain L20)).